The sequence spans 117 residues: V-type sodium ATPase subunit F (117 aa).

A disordered region spans residues 1-20 (MARILTRIKEAEENNQKKEE). Residues 7–20 (RIKEAEENNQKKEE) are compositionally biased toward basic and acidic residues.

It belongs to the V-ATPase G subunit family.

In terms of biological role, involved in ATP-driven sodium extrusion. In Enterococcus hirae (strain ATCC 9790 / DSM 20160 / JCM 8729 / LMG 6399 / NBRC 3181 / NCIMB 6459 / NCDO 1258 / NCTC 12367 / WDCM 00089 / R), this protein is V-type sodium ATPase subunit F (ntpF).